The chain runs to 59 residues: Large ribosomal subunit protein uL30 (59 aa).

Belongs to the universal ribosomal protein uL30 family. As to quaternary structure, part of the 50S ribosomal subunit.

The chain is Large ribosomal subunit protein uL30 from Mycolicibacterium vanbaalenii (strain DSM 7251 / JCM 13017 / BCRC 16820 / KCTC 9966 / NRRL B-24157 / PYR-1) (Mycobacterium vanbaalenii).